The chain runs to 330 residues: Olfactory receptor 5T9 (330 aa).

Over 1–37 (MSIHSPGYTVRRIPVNNVTDTTMFILTGFTDDADLQV) the chain is Extracellular. N-linked (GlcNAc...) asparagine glycosylation occurs at N17. Residues 38–58 (LLFLLFFVIYLFTLIGNLGLV) traverse the membrane as a helical segment. Over 59–66 (LLVIGDSR) the chain is Cytoplasmic. The helical transmembrane segment at 67–87 (LHNPMYYFLSVLSFLDACYST) threads the bilayer. The Extracellular segment spans residues 88-111 (VVTPKMLVNFISNDKSISYPGCVT). Residues C109 and C201 are joined by a disulfide bond. A helical membrane pass occupies residues 112–132 (EMFLFVTFGTTECFLLAAMAY). Residues 133–145 (DRFVAIYNPLLYA) lie on the Cytoplasmic side of the membrane. Residues 146–166 (VKMSPRVYIPLIIACYSGGIM) form a helical membrane-spanning segment. Over 167-208 (HATIHTVATFSLSFCASNEIRHVFCDIPPLLAISCSNTNINQ) the chain is Extracellular. A helical membrane pass occupies residues 209-229 (LLLFYCVGSIEIITILIVLVS). Topologically, residues 230-249 (YSFILFAILKMNSAEGRRKI) are cytoplasmic. A helical membrane pass occupies residues 250 to 270 (FSTCGSHLTGVSIYHGTILFM). At 271–283 (YVRPSSNYALEHD) the chain is on the extracellular side. Residues 284–304 (MIVSTFYTIVIPMLNPIIYSL) form a helical membrane-spanning segment. Residues 305 to 330 (RNKDVKEAMKKIFERNFFMNKVHFKL) lie on the Cytoplasmic side of the membrane.

The protein belongs to the G-protein coupled receptor 1 family.

It localises to the cell membrane. In terms of biological role, potential odorant receptor. This is Olfactory receptor 5T9 from Mus musculus (Mouse).